A 79-amino-acid chain; its full sequence is uncharacterized protein (79 aa).

This is an uncharacterized protein from Escherichia coli O6:H1 (strain CFT073 / ATCC 700928 / UPEC).